The primary structure comprises 99 residues: Protein NCBP2AS2 (99 aa).

Residues 76-99 (ELRRGLRGRSGPPPGSQRGPGANI) are disordered.

This is Protein NCBP2AS2 from Homo sapiens (Human).